Here is a 207-residue protein sequence, read N- to C-terminus: Thaumatin-like protein 1 (207 aa).

8 cysteine pairs are disulfide-bonded: Cys-9–Cys-202, Cys-50–Cys-60, Cys-65–Cys-71, Cys-117–Cys-191, Cys-122–Cys-174, Cys-130–Cys-140, Cys-144–Cys-153, and Cys-154–Cys-161.

The protein belongs to the thaumatin family. In terms of assembly, monomer. Post-translationally, not glycosylated.

Its subcellular location is the secreted. In terms of biological role, acidic thaumatin-like protein. Exhibits weak beta-1,3-glucanase activity with laminarin as substrate. The polypeptide is Thaumatin-like protein 1 (TLP1) (Manilkara zapota (Sapodilla plum)).